The primary structure comprises 101 residues: Small ribosomal subunit protein uS14 (101 aa).

The protein belongs to the universal ribosomal protein uS14 family. In terms of assembly, part of the 30S ribosomal subunit. Contacts proteins S3 and S10.

In terms of biological role, binds 16S rRNA, required for the assembly of 30S particles and may also be responsible for determining the conformation of the 16S rRNA at the A site. This is Small ribosomal subunit protein uS14 from Neisseria meningitidis serogroup C / serotype 2a (strain ATCC 700532 / DSM 15464 / FAM18).